Consider the following 429-residue polypeptide: C4-dicarboxylate transport protein (429 aa).

The next 8 helical transmembrane spans lie at 9 to 29 (VLYV…HFYP), 45 to 65 (LIKM…IAGM), 79 to 99 (LLYF…ATHI), 149 to 169 (GEIL…AHLG), 185 to 205 (VLFG…FGAM), 223 to 243 (LIGT…GTIA), 308 to 328 (IYMT…LTWM), and 356 to 376 (AATL…ILGI).

This sequence belongs to the dicarboxylate/amino acid:cation symporter (DAACS) (TC 2.A.23) family.

It is found in the cell inner membrane. Functionally, responsible for the transport of dicarboxylates such as succinate, fumarate, and malate from the periplasm across the membrane. The chain is C4-dicarboxylate transport protein from Burkholderia ambifaria (strain ATCC BAA-244 / DSM 16087 / CCUG 44356 / LMG 19182 / AMMD) (Burkholderia cepacia (strain AMMD)).